Reading from the N-terminus, the 113-residue chain is Large ribosomal subunit protein uL22 (113 aa).

This sequence belongs to the universal ribosomal protein uL22 family. As to quaternary structure, part of the 50S ribosomal subunit.

In terms of biological role, this protein binds specifically to 23S rRNA; its binding is stimulated by other ribosomal proteins, e.g. L4, L17, and L20. It is important during the early stages of 50S assembly. It makes multiple contacts with different domains of the 23S rRNA in the assembled 50S subunit and ribosome. The globular domain of the protein is located near the polypeptide exit tunnel on the outside of the subunit, while an extended beta-hairpin is found that lines the wall of the exit tunnel in the center of the 70S ribosome. In Trichlorobacter lovleyi (strain ATCC BAA-1151 / DSM 17278 / SZ) (Geobacter lovleyi), this protein is Large ribosomal subunit protein uL22.